The sequence spans 126 residues: Ribosome-binding factor A (126 aa).

It belongs to the RbfA family. In terms of assembly, monomer. Binds 30S ribosomal subunits, but not 50S ribosomal subunits or 70S ribosomes.

It is found in the cytoplasm. One of several proteins that assist in the late maturation steps of the functional core of the 30S ribosomal subunit. Associates with free 30S ribosomal subunits (but not with 30S subunits that are part of 70S ribosomes or polysomes). Required for efficient processing of 16S rRNA. May interact with the 5'-terminal helix region of 16S rRNA. The chain is Ribosome-binding factor A from Thermosipho africanus (strain TCF52B).